The sequence spans 450 residues: Phosphoglucosamine mutase (450 aa).

Residue Ser104 is the Phosphoserine intermediate of the active site. Residues Ser104, Asp243, Asp245, and Asp247 each contribute to the Mg(2+) site. Ser104 is modified (phosphoserine).

It belongs to the phosphohexose mutase family. Mg(2+) serves as cofactor. Activated by phosphorylation.

It carries out the reaction alpha-D-glucosamine 1-phosphate = D-glucosamine 6-phosphate. Catalyzes the conversion of glucosamine-6-phosphate to glucosamine-1-phosphate. The polypeptide is Phosphoglucosamine mutase (Cutibacterium acnes (strain DSM 16379 / KPA171202) (Propionibacterium acnes)).